Here is a 252-residue protein sequence, read N- to C-terminus: Ubiquitin carboxyl-terminal hydrolase isozyme L1 (252 aa).

Met-1 is subject to N-acetylmethionine. Residues 2 to 250 form the UCH catalytic domain; the sequence is QLKPMEINPE…VRFSAVALCK (249 aa). The interaction with ubiquitin stretch occupies residues 5-10; the sequence is PMEINP. Cys-119 (nucleophile) is an active-site residue. Position 154 is a phosphoserine (Ser-154). His-190 serves as the catalytic Proton donor. An interaction with ubiquitin region spans residues 240-245; that stretch reads EVRFSA. A lipid anchor (S-farnesyl cysteine) is attached at Cys-249. Residues 250-252 constitute a propeptide, removed in mature form; sequence KAA.

The protein belongs to the peptidase C12 family. In terms of assembly, monomer. Homodimer. Interacts with COPS5 and SNCA. O-glycosylated. Neurons and cells of the diffuse neuroendocrine system and their tumors.

Its subcellular location is the cytoplasm. The protein localises to the endoplasmic reticulum membrane. It carries out the reaction Thiol-dependent hydrolysis of ester, thioester, amide, peptide and isopeptide bonds formed by the C-terminal Gly of ubiquitin (a 76-residue protein attached to proteins as an intracellular targeting signal).. Its function is as follows. Ubiquitin-protein hydrolase involved both in the processing of ubiquitin precursors and of ubiquitinated proteins. This enzyme is a thiol protease that recognizes and hydrolyzes a peptide bond at the C-terminal glycine of ubiquitin. Also binds to free monoubiquitin and may prevent its degradation in lysosomes. The homodimer may have ATP-independent ubiquitin ligase activity. This chain is Ubiquitin carboxyl-terminal hydrolase isozyme L1 (UCHL1), found in Bos taurus (Bovine).